The following is a 369-amino-acid chain: MNKAYYIGLMSGTSMDGVDAVLVDFAGEQPQLIATHTEAIPSHLLKGLQRLCLPGNDEINRLGRLDRSVGKLFALAVNNLLAKAQIAKEDIIAIGSHGQTVRHMPNLEVGFTLQIGDPNTIATETGIDVIADFRRKDIALGGQGAPLVPAFHQQTFAQVGKKRVILNIGGIANITYLTGNREEVLGFDTGPGNTLIDAWIQQVKNEPYDKDGEWAASGNTDQQLLAQLLSHPYFSLAYPKSTGRELFNQAWLEQQLSEFNQLDEEDIQSTLLDLTCHSIARDILKLAPVGELFVCGGGAFNTELMQRLAALLPDYHIDTTSALGVDPKWAEGIAFAWLAMRHNLGLPANLPAVTGASREAVLGGRFSAK.

An ATP-binding site is contributed by 12 to 19; that stretch reads GTSMDGVD.

The protein belongs to the anhydro-N-acetylmuramic acid kinase family.

It catalyses the reaction 1,6-anhydro-N-acetyl-beta-muramate + ATP + H2O = N-acetyl-D-muramate 6-phosphate + ADP + H(+). Its pathway is amino-sugar metabolism; 1,6-anhydro-N-acetylmuramate degradation. It participates in cell wall biogenesis; peptidoglycan recycling. Catalyzes the specific phosphorylation of 1,6-anhydro-N-acetylmuramic acid (anhMurNAc) with the simultaneous cleavage of the 1,6-anhydro ring, generating MurNAc-6-P. Is required for the utilization of anhMurNAc either imported from the medium or derived from its own cell wall murein, and thus plays a role in cell wall recycling. This is Anhydro-N-acetylmuramic acid kinase from Shewanella sp. (strain MR-4).